The following is a 582-amino-acid chain: Multicopper oxidase LPR1 homolog 1 (582 aa).

The N-terminal stretch at 1–20 is a signal peptide; the sequence is MRAKVELAVLLLVLVGVAAG. Cu cation-binding residues include His-150, His-152, His-198, and His-200. N-linked (GlcNAc...) asparagine glycans are attached at residues Asn-256, Asn-300, and Asn-308. In terms of domain architecture, Plastocyanin-like spans 285–354; sequence PFLAVARRRY…DVVVDFSQST (70 aa). Cu cation is bound by residues His-467, His-470, and His-472. An N-linked (GlcNAc...) asparagine glycan is attached at Asn-504. Cu cation contacts are provided by His-563, Cys-564, His-565, His-569, and Met-574.

It belongs to the multicopper oxidase family. Cu cation is required as a cofactor. Highly expressed in roots, and at lower levels in basal stems and leaf blades.

The protein localises to the endoplasmic reticulum membrane. In terms of biological role, multicopper oxidase that may play a role in the maintenance of inorganic phosphate homeostasis. The polypeptide is Multicopper oxidase LPR1 homolog 1 (Oryza sativa subsp. japonica (Rice)).